The primary structure comprises 77 residues: Cytoplasmic envelopment protein 3 (77 aa).

G2 carries N-myristoyl glycine; by host lipidation.

The protein belongs to the herpesviridae cytoplasmic envelopment protein 3 family. Interacts with cytoplasmic envelopment protein 2; this interaction is essential for the proper localization of each protein to the assembly complex and thus for the production of infectious virus. Myristoylation and palmitoylation (probably on one or more of the nearby cysteines at the N-terminus) enable membrane-binding and Golgi apparatus-specific targeting and are essential for efficient packaging. Post-translationally, phosphorylated. Phosphorylation does not seem to be required for recycling to the host Golgi apparatus. Packaging is selective for underphosphorylated forms.

The protein resides in the virion tegument. It localises to the virion membrane. It is found in the host cell membrane. The protein localises to the host Golgi apparatus membrane. In terms of biological role, plays an important role in the cytoplasmic envelopment of tegument proteins and capsids during the assembly and egress processes. Also participates in viral entry at the fusion step probably by regulating the core fusion machinery. This Human herpesvirus 6A (strain Uganda-1102) (HHV-6 variant A) protein is Cytoplasmic envelopment protein 3 (U71).